The following is a 225-amino-acid chain: Small ribosomal subunit protein uS7 (225 aa).

This sequence belongs to the universal ribosomal protein uS7 family. In terms of assembly, component of the small ribosomal subunit. Mature ribosomes consist of a small (40S) and a large (60S) subunit. The 40S subunit contains about 32 different proteins and 1 molecule of RNA (18S). The 60S subunit contains 45 different proteins and 3 molecules of RNA (25S, 5.8S and 5S).

It is found in the cytoplasm. In terms of biological role, component of the ribosome, a large ribonucleoprotein complex responsible for the synthesis of proteins in the cell. The small ribosomal subunit (SSU) binds messenger RNAs (mRNAs) and translates the encoded message by selecting cognate aminoacyl-transfer RNA (tRNA) molecules. The large subunit (LSU) contains the ribosomal catalytic site termed the peptidyl transferase center (PTC), which catalyzes the formation of peptide bonds, thereby polymerizing the amino acids delivered by tRNAs into a polypeptide chain. The nascent polypeptides leave the ribosome through a tunnel in the LSU and interact with protein factors that function in enzymatic processing, targeting, and the membrane insertion of nascent chains at the exit of the ribosomal tunnel. This is Small ribosomal subunit protein uS7 (RPS5) from Candida albicans (strain SC5314 / ATCC MYA-2876) (Yeast).